Consider the following 528-residue polypeptide: MASMRESDTGLWLHNKLGATDELWAPPSIASLLTAAVIDNIRLCFHGLSSAVKLKLLLGTLHLPRRTVDEMKGALMEIIQLASLDSDPWVLMVADILKSFPDTGSLNLELEEQNPNVQDILGELREKVGECEASAMLPLECQYLNKNALTTLAGPLTPPVKHFQLKRKPKSATLRAELLQKSTETAQQLKRSAGVPFHAKGRGLLRKMDTTTPLKGIPKQAPFRSPTAPSVFSPTGNRTPIPPSRTLLRKERGVKLLDISELDMVGAGREAKRRRKTLDAEVVEKPAKEETVVENATPDYAAGLVSTQKLGSLNNEPALPSTSYLPSTPSVVPASSYIPSSETPPAPSSREASRPPEEPSAPSPTLPAQFKQRAPMYNSGLSPATPTPAAPTSPLTPTTPPAVAPTTQTPPVAMVAPQTQAPAQQQPKKNLSLTREQMFAAQEMFKTANKVTRPEKALILGFMAGSRENPCQEQGDVIQIKLSEHTEDLPKADGQGSTTMLVDTVFEMNYATGQWTRFKKYKPMTNVS.

In terms of domain architecture, HDAg spans 89–248 (WVLMVADILK…TPIPPSRTLL (160 aa)). The NELF-C/D-binding stretch occupies residues 125 to 188 (REKVGECEAS…LQKSTETAQQ (64 aa)). Thr-157 bears the Phosphothreonine mark. The interval 189–248 (LKRSAGVPFHAKGRGLLRKMDTTTPLKGIPKQAPFRSPTAPSVFSPTGNRTPIPPSRTLL) is RNAPII-binding. Positions 215–245 (KGIPKQAPFRSPTAPSVFSPTGNRTPIPPSR) are disordered. 2 positions are modified to phosphoserine: Ser-225 and Ser-233. Over residues 227–238 (TAPSVFSPTGNR) the composition is skewed to polar residues. Thr-277 carries the phosphothreonine modification. Low complexity predominate over residues 320–341 (PSTSYLPSTPSVVPASSYIPSS). Positions 320–409 (PSTSYLPSTP…PPAVAPTTQT (90 aa)) are disordered. Residue Ser-363 is modified to Phosphoserine.

This sequence belongs to the NELF-A family. In terms of assembly, the NELF complex is composed of NELFA, NELFB, NELFCD (isoform NELF-C or isoform NELF-D) and NELFE; NELFA and NELFCD form a stable subcomplex that binds to the N-terminus of NELFB. In vitro, the NELFA:NELFCD subcomplex binds to ssDNA and ssRNA in a sequence- and structure-dependent manner. Interacts with the RNA polymerase II complex when it is not phosphorylated by P-TEFb. As to expression, ubiquitous. Expressed in heart, brain, placenta, liver, skeletal muscle, kidney and pancreas. Expressed at lower level in adult lung. Expressed in fetal brain, lung, liver and kidney.

The protein resides in the nucleus. In terms of biological role, essential component of the NELF complex, a complex that negatively regulates the elongation of transcription by RNA polymerase II. The NELF complex, which acts via an association with the DSIF complex and causes transcriptional pausing, is counteracted by the P-TEFb kinase complex. Functionally, (Microbial infection) The NELF complex is involved in HIV-1 latency possibly involving recruitment of PCF11 to paused RNA polymerase II. This Homo sapiens (Human) protein is Negative elongation factor A (NELFA).